Consider the following 100-residue polypeptide: ATP-dependent Clp protease adapter protein ClpS (100 aa).

Belongs to the ClpS family. In terms of assembly, binds to the N-terminal domain of the chaperone ClpA.

Its function is as follows. Involved in the modulation of the specificity of the ClpAP-mediated ATP-dependent protein degradation. This is ATP-dependent Clp protease adapter protein ClpS from Neisseria meningitidis serogroup B (strain ATCC BAA-335 / MC58).